The primary structure comprises 227 residues: ATP-dependent dethiobiotin synthetase BioD (227 aa).

13–18 (DAGKTT) contacts ATP. Thr17 is a binding site for Mg(2+). The active site involves Lys38. Residues Asp55, 118 to 121 (EGAG), 178 to 179 (NR), 207 to 209 (PYI), and Glu214 each bind ATP. Mg(2+)-binding residues include Asp55 and Glu118.

It belongs to the dethiobiotin synthetase family. In terms of assembly, homodimer. It depends on Mg(2+) as a cofactor.

Its subcellular location is the cytoplasm. The enzyme catalyses (7R,8S)-7,8-diammoniononanoate + CO2 + ATP = (4R,5S)-dethiobiotin + ADP + phosphate + 3 H(+). The protein operates within cofactor biosynthesis; biotin biosynthesis; biotin from 7,8-diaminononanoate: step 1/2. Catalyzes a mechanistically unusual reaction, the ATP-dependent insertion of CO2 between the N7 and N8 nitrogen atoms of 7,8-diaminopelargonic acid (DAPA, also called 7,8-diammoniononanoate) to form a ureido ring. In Tolumonas auensis (strain DSM 9187 / NBRC 110442 / TA 4), this protein is ATP-dependent dethiobiotin synthetase BioD.